Reading from the N-terminus, the 541-residue chain is Phosphoenolpyruvate carboxykinase (ATP) (541 aa).

Substrate is bound by residues Arg67, Tyr207, and Lys213. Residues Lys213, His232, and 248-256 (GLSGTGKTT) contribute to the ATP site. Mn(2+) is bound by residues Lys213 and His232. Asp269 is a Mn(2+) binding site. ATP is bound by residues Glu297, Arg333, 449–450 (RI), and Thr455. Arg333 provides a ligand contact to substrate.

This sequence belongs to the phosphoenolpyruvate carboxykinase (ATP) family. As to quaternary structure, monomer. It depends on Mn(2+) as a cofactor.

The protein localises to the cytoplasm. The enzyme catalyses oxaloacetate + ATP = phosphoenolpyruvate + ADP + CO2. It functions in the pathway carbohydrate biosynthesis; gluconeogenesis. Its function is as follows. Involved in the gluconeogenesis. Catalyzes the conversion of oxaloacetate (OAA) to phosphoenolpyruvate (PEP) through direct phosphoryl transfer between the nucleoside triphosphate and OAA. This is Phosphoenolpyruvate carboxykinase (ATP) from Vibrio atlanticus (strain LGP32) (Vibrio splendidus (strain Mel32)).